We begin with the raw amino-acid sequence, 61 residues long: Photosystem II reaction center protein K (61 aa).

Residues 1–24 (MPNILSLTCICFNSVLCPTSFFFA) constitute a propeptide that is removed on maturation. Residues 32-52 (IFNPIVDVMPVIPVLFFLLAF) traverse the membrane as a helical segment.

It belongs to the PsbK family. In terms of assembly, PSII is composed of 1 copy each of membrane proteins PsbA, PsbB, PsbC, PsbD, PsbE, PsbF, PsbH, PsbI, PsbJ, PsbK, PsbL, PsbM, PsbT, PsbX, PsbY, PsbZ, Psb30/Ycf12, at least 3 peripheral proteins of the oxygen-evolving complex and a large number of cofactors. It forms dimeric complexes.

Its subcellular location is the plastid. The protein localises to the chloroplast thylakoid membrane. In terms of biological role, one of the components of the core complex of photosystem II (PSII). PSII is a light-driven water:plastoquinone oxidoreductase that uses light energy to abstract electrons from H(2)O, generating O(2) and a proton gradient subsequently used for ATP formation. It consists of a core antenna complex that captures photons, and an electron transfer chain that converts photonic excitation into a charge separation. In Sorghum bicolor (Sorghum), this protein is Photosystem II reaction center protein K.